A 134-amino-acid polypeptide reads, in one-letter code: Transcription antitermination protein NusB (134 aa).

This sequence belongs to the NusB family.

In terms of biological role, involved in transcription antitermination. Required for transcription of ribosomal RNA (rRNA) genes. Binds specifically to the boxA antiterminator sequence of the ribosomal RNA (rrn) operons. The chain is Transcription antitermination protein NusB from Shewanella baltica (strain OS223).